Consider the following 160-residue polypeptide: Cyanate hydratase (160 aa).

Catalysis depends on residues R100, E103, and S126.

The protein belongs to the cyanase family.

The enzyme catalyses cyanate + hydrogencarbonate + 3 H(+) = NH4(+) + 2 CO2. In terms of biological role, catalyzes the reaction of cyanate with bicarbonate to produce ammonia and carbon dioxide. This chain is Cyanate hydratase, found in Neosartorya fischeri (strain ATCC 1020 / DSM 3700 / CBS 544.65 / FGSC A1164 / JCM 1740 / NRRL 181 / WB 181) (Aspergillus fischerianus).